A 318-amino-acid polypeptide reads, in one-letter code: Protein-methionine-sulfoxide reductase catalytic subunit MsrP (318 aa).

Residues Met1–Ala40 constitute a signal peptide (tat-type signal). Mo-molybdopterin-binding positions include Asn72, Tyr75–Glu76, Cys130, Thr165, Asn217, Arg222, and Ser233–Lys235.

Belongs to the MsrP family. In terms of assembly, heterodimer of a catalytic subunit (MsrP) and a heme-binding subunit (MsrQ). The cofactor is Mo-molybdopterin. In terms of processing, predicted to be exported by the Tat system. The position of the signal peptide cleavage has not been experimentally proven.

Its subcellular location is the periplasm. The catalysed reaction is L-methionyl-[protein] + a quinone + H2O = L-methionyl-(S)-S-oxide-[protein] + a quinol. It carries out the reaction L-methionyl-[protein] + a quinone + H2O = L-methionyl-(R)-S-oxide-[protein] + a quinol. Its function is as follows. Part of the MsrPQ system that repairs oxidized periplasmic proteins containing methionine sulfoxide residues (Met-O), using respiratory chain electrons. Thus protects these proteins from oxidative-stress damage caused by reactive species of oxygen and chlorine generated by the host defense mechanisms. MsrPQ is essential for the maintenance of envelope integrity under bleach stress, rescuing a wide series of structurally unrelated periplasmic proteins from methionine oxidation. The catalytic subunit MsrP is non-stereospecific, being able to reduce both (R-) and (S-) diastereoisomers of methionine sulfoxide. The chain is Protein-methionine-sulfoxide reductase catalytic subunit MsrP from Actinobacillus pleuropneumoniae serotype 3 (strain JL03).